A 100-amino-acid polypeptide reads, in one-letter code: Urease subunit gamma (100 aa).

The protein belongs to the urease gamma subunit family. In terms of assembly, heterotrimer of UreA (gamma), UreB (beta) and UreC (alpha) subunits. Three heterotrimers associate to form the active enzyme.

The protein resides in the cytoplasm. The catalysed reaction is urea + 2 H2O + H(+) = hydrogencarbonate + 2 NH4(+). Its pathway is nitrogen metabolism; urea degradation; CO(2) and NH(3) from urea (urease route): step 1/1. The sequence is that of Urease subunit gamma from Pseudomonas entomophila (strain L48).